The primary structure comprises 535 residues: MEKGARHRHNTDKNHAGGSESEDFPEASSGGGGVALKKEIGLVSACGIIVGNIIGSGIFVSPKGVLENAGSVGLAVIVWIVTGLITAVGALCYAELGVTIPKSGGDYSYVKDIFGGLAGFLRLWIAVLVIYPTNQAVIALTFSNYVLQPLFPTCFPPDSGLRLLAAICLLLLTWVNCSSVRWATRVQDIFTAGKLLALALIIIMGVVQICKGEYFWLEPKNAFDNFQEPDIGLIALAFLQGSFAYGGWNFLNYVTEELVDPYKNLPRAIFISIPLVTFVYVFANVAYITAMSPQELLASNAVAVTFGEKLLGVMAWIMPISVALSTFGGVNGSLFTSSRLFFAGAREGHLPSVLAMIHVKRCTPIPALLFTCLSTLLMLVTSDMYTLINYVGFINYLFYGVTVAGQIVLRWKKPDIPRPIKINLLFPIIYLLFWAFLLIFSLWSEPVVCGIGLAIMLTGVPVYFLGVYWQHKPKCFNDFIELLTLVSQKMCVVVYPEVDGGSGTEGTREDMEEQQQPICQPSPGKDKDSLEQSQP.

Basic residues predominate over residues 1–10 (MEKGARHRHN). Residues 1 to 30 (MEKGARHRHNTDKNHAGGSESEDFPEASSG) form a disordered region. Residues 1 to 44 (MEKGARHRHNTDKNHAGGSESEDFPEASSGGGGVALKKEIGLVS) are Cytoplasmic-facing. Residues S19, S28, and S29 each carry the phosphoserine modification. A helical transmembrane segment spans residues 45–65 (ACGIIVGNIIGSGIFVSPKGV). I53 lines the L-leucine pocket. The Extracellular segment spans residues 66-73 (LENAGSVG). The helical transmembrane segment at 74–95 (LAVIVWIVTGLITAVGALCYAE) threads the bilayer. Over 96-116 (LGVTIPKSGGDYSYVKDIFGG) the chain is Cytoplasmic. A helical membrane pass occupies residues 117-149 (LAGFLRLWIAVLVIYPTNQAVIALTFSNYVLQP). N134 provides a ligand contact to L-tryptophan. Over 150–157 (LFPTCFPP) the chain is Extracellular. The chain crosses the membrane as a helical span at residues 158-178 (DSGLRLLAAICLLLLTWVNCS). Topologically, residues 179-181 (SVR) are cytoplasmic. Residues 182-210 (WATRVQDIFTAGKLLALALIIIMGVVQIC) form a helical membrane-spanning segment. Over 211–230 (KGEYFWLEPKNAFDNFQEPD) the chain is Extracellular. A helical transmembrane segment spans residues 231–252 (IGLIALAFLQGSFAYGGWNFLN). An L-leucine-binding site is contributed by G246. Topologically, residues 253-265 (YVTEELVDPYKNL) are cytoplasmic. Residues 266 to 287 (PRAIFISIPLVTFVYVFANVAY) traverse the membrane as a helical segment. Over 288–312 (ITAMSPQELLASNAVAVTFGEKLLG) the chain is Extracellular. The chain crosses the membrane as a helical span at residues 313–338 (VMAWIMPISVALSTFGGVNGSLFTSS). Residues 339–364 (RLFFAGAREGHLPSVLAMIHVKRCTP) lie on the Cytoplasmic side of the membrane. Residues 365–382 (IPALLFTCLSTLLMLVTS) form a helical membrane-spanning segment. The Extracellular segment spans residues 383–386 (DMYT). A helical transmembrane segment spans residues 387-408 (LINYVGFINYLFYGVTVAGQIV). N395 contacts L-tryptophan. Topologically, residues 409–423 (LRWKKPDIPRPIKIN) are cytoplasmic. The next 2 helical transmembrane spans lie at 424-446 (LLFP…WSEP) and 447-466 (VVCG…YFLG). At 467–535 (VYWQHKPKCF…DKDSLEQSQP (69 aa)) the chain is on the cytoplasmic side. Positions 500-535 (GGSGTEGTREDMEEQQQPICQPSPGKDKDSLEQSQP) are disordered. The segment covering 524-535 (GKDKDSLEQSQP) has biased composition (basic and acidic residues). Position 529 is a phosphoserine (S529).

It belongs to the amino acid-polyamine-organocation (APC) superfamily. L-type amino acid transporter (LAT) (TC 2.A.3.8) family. As to quaternary structure, disulfide-linked heterodimer composed of the catalytic light chain subunit SLC7A8 and the heavy chain subunit SLC3A2. SLC3A2 acts as a chaperone for correct plasma membrane trafficking and stabilization of SLC7A8 and modulates the substrate affinity and specificity of SLC7A8. ICAM-1 associates with the heterodimer SLC3A2/SLC7A8; facilitates leucine uptake. Mainly expressed in kidney and small intestine.

Its subcellular location is the cell membrane. The protein localises to the basolateral cell membrane. It catalyses the reaction L-histidine(in) + L-phenylalanine(out) = L-histidine(out) + L-phenylalanine(in). The enzyme catalyses L-tryptophan(in) + L-phenylalanine(out) = L-tryptophan(out) + L-phenylalanine(in). It carries out the reaction L-isoleucine(in) + L-phenylalanine(out) = L-isoleucine(out) + L-phenylalanine(in). The catalysed reaction is L-valine(in) + L-phenylalanine(out) = L-valine(out) + L-phenylalanine(in). It catalyses the reaction L-leucine(in) + L-phenylalanine(out) = L-leucine(out) + L-phenylalanine(in). The enzyme catalyses L-glutamine(in) + L-phenylalanine(out) = L-glutamine(out) + L-phenylalanine(in). It carries out the reaction L-cysteine(in) + L-phenylalanine(out) = L-cysteine(out) + L-phenylalanine(in). The catalysed reaction is L-phenylalanine(out) + L-methionine(in) = L-phenylalanine(in) + L-methionine(out). It catalyses the reaction L-leucine(out) + L-methionine(in) = L-leucine(in) + L-methionine(out). The enzyme catalyses L-cysteine(out) + L-methionine(in) = L-cysteine(in) + L-methionine(out). It carries out the reaction S-methylmercury-L-cysteine(out) + L-methionine(in) = S-methylmercury-L-cysteine(in) + L-methionine(out). The catalysed reaction is S-methylmercury-L-cysteine(in) + L-leucine(out) = S-methylmercury-L-cysteine(out) + L-leucine(in). It catalyses the reaction S-methylmercury-L-cysteine(in) + L-phenylalanine(out) = S-methylmercury-L-cysteine(out) + L-phenylalanine(in). The enzyme catalyses L-phenylalanine(out) + L-serine(in) = L-phenylalanine(in) + L-serine(out). It carries out the reaction L-phenylalanine(out) + glycine(in) = L-phenylalanine(in) + glycine(out). The catalysed reaction is L-phenylalanine(out) + L-alanine(in) = L-phenylalanine(in) + L-alanine(out). It catalyses the reaction 3,3',5-triiodo-L-thyronine(out) = 3,3',5-triiodo-L-thyronine(in). The enzyme catalyses 3,3'-diiodo-L-thyronine(out) = 3,3'-diiodo-L-thyronine(in). It carries out the reaction L-dopa(out) + L-phenylalanine(in) = L-dopa(in) + L-phenylalanine(out). The transporter activity is inhibited by 2-aminobicyclo-(2,2,1)heptane-2-carboxylic acid (BCH) (a specific inhibitor of system L transport). Associates with SLC3A2 to form a functional heterodimeric complex that translocates small and large neutral amino acids with broad specificity and a stoichiometry of 1:1. Functions as amino acid antiporter mediating the influx of extracellular essential amino acids mainly in exchange with the efflux of highly concentrated intracellular amino acids. Has relatively symmetrical selectivities but strongly asymmetrical substrate affinities at both the intracellular and extracellular sides of the transporter. This asymmetry allows SLC7A8 to regulate intracellular amino acid pools (mM concentrations) by exchange with external amino acids (uM concentration range), equilibrating the relative concentrations of different amino acids across the plasma membrane instead of mediating their net uptake. May play an essential role in the reabsorption of neutral amino acids from the epithelial cells to the bloodstream in the kidney. Involved in the uptake of methylmercury (MeHg) when administered as the L-cysteine or D,L-homocysteine complexes, and hence plays a role in metal ion homeostasis and toxicity. Involved in the cellular activity of small molecular weight nitrosothiols, via the stereoselective transport of L-nitrosocysteine (L-CNSO) across the transmembrane. Imports the thyroid hormone diiodothyronine (T2) and to a smaller extent triiodothyronine (T3) but not rT 3 or thyroxine (T4). Mediates the uptake of L-DOPA. May participate in auditory function. This Oryctolagus cuniculus (Rabbit) protein is Large neutral amino acids transporter small subunit 2.